A 162-amino-acid polypeptide reads, in one-letter code: Interleukin-15 (162 aa).

Residues 1–29 (MRILKPYLRSTSIQCYLCLLLNSHFLTEA) form the signal peptide. A propeptide spanning residues 30–48 (GIHVFILGCISASLPKTEA) is cleaved from the precursor. 2 disulfides stabilise this stretch: cysteine 83-cysteine 133 and cysteine 90-cysteine 136. 4 N-linked (GlcNAc...) asparagine glycosylation sites follow: asparagine 104, asparagine 113, asparagine 121, and asparagine 127.

Belongs to the IL-15/IL-21 family.

It localises to the secreted. Its function is as follows. Cytokine that plays a major role in the development of inflammatory and protective immune responses to microbial invaders and parasites by modulating immune cells of both the innate and adaptive immune systems. Stimulates the proliferation of natural killer cells, T-cells and B-cells and promotes the secretion of several cytokines. In monocytes, induces the production of IL8 and monocyte chemotactic protein 1/CCL2, two chemokines that attract neutrophils and monocytes respectively to sites of infection. Unlike most cytokines, which are secreted in soluble form, IL15 is expressed in association with its high affinity IL15RA on the surface of IL15-producing cells and delivers signals to target cells that express IL2RB and IL2RG receptor subunits. Binding to its receptor triggers the phosphorylation of JAK1 and JAK3 and the recruitment and subsequent phosphorylation of signal transducer and activator of transcription-3/STAT3 and STAT5. In mast cells, induces the rapid tyrosine phosphorylation of STAT6 and thereby controls mast cell survival and release of cytokines such as IL4. The chain is Interleukin-15 (IL15) from Bos taurus (Bovine).